The sequence spans 106 residues: UPF0145 protein PSEEN3024 (106 aa).

The protein belongs to the UPF0145 family.

In Pseudomonas entomophila (strain L48), this protein is UPF0145 protein PSEEN3024.